The chain runs to 105 residues: Large ribosomal subunit protein uL24 (105 aa).

This sequence belongs to the universal ribosomal protein uL24 family. In terms of assembly, part of the 50S ribosomal subunit.

One of two assembly initiator proteins, it binds directly to the 5'-end of the 23S rRNA, where it nucleates assembly of the 50S subunit. Functionally, one of the proteins that surrounds the polypeptide exit tunnel on the outside of the subunit. The sequence is that of Large ribosomal subunit protein uL24 from Tolumonas auensis (strain DSM 9187 / NBRC 110442 / TA 4).